Consider the following 181-residue polypeptide: Inner membrane-spanning protein YciB (181 aa).

Transmembrane regions (helical) follow at residues 10 to 30, 50 to 70, 80 to 100, 118 to 138, and 148 to 168; these read LVIFFAVYKFFDIYIASGALI, MHLITFAMVTVFGTLTLVFHD, IIYSLFAIALGVSQLLNKSIL, VTWYWVVFFASCGLVNIYVAF, and FKVFGLTALTLINTVLTVFYL.

The protein belongs to the YciB family.

The protein localises to the cell inner membrane. Its function is as follows. Plays a role in cell envelope biogenesis, maintenance of cell envelope integrity and membrane homeostasis. The protein is Inner membrane-spanning protein YciB of Shewanella baltica (strain OS223).